The following is a 797-amino-acid chain: Probable exo-1,4-beta-xylosidase xlnD (797 aa).

The N-terminal stretch at 1–20 is a signal peptide; that stretch reads MPGAASIVAVLAALLPTALG. N23, N87, N142, and N237 each carry an N-linked (GlcNAc...) asparagine glycan. D310 is an active-site residue. N326, N391, N404, N442, N479, N521, N617, N644, N657, N684, and N706 each carry an N-linked (GlcNAc...) asparagine glycan.

This sequence belongs to the glycosyl hydrolase 3 family.

The protein localises to the secreted. It carries out the reaction Hydrolysis of (1-&gt;4)-beta-D-xylans, to remove successive D-xylose residues from the non-reducing termini.. It functions in the pathway glycan degradation; xylan degradation. Functionally, xylan 1,4-beta-xylosidase involved in the hydrolysis of xylan, a major structural heterogeneous polysaccharide found in plant biomass representing the second most abundant polysaccharide in the biosphere, after cellulose. The chain is Probable exo-1,4-beta-xylosidase xlnD (xlnD) from Aspergillus flavus (strain ATCC 200026 / FGSC A1120 / IAM 13836 / NRRL 3357 / JCM 12722 / SRRC 167).